Consider the following 443-residue polypeptide: D(2) dopamine receptor (443 aa).

Residues Met1 to Tyr37 lie on the Extracellular side of the membrane. N-linked (GlcNAc...) asparagine glycans are attached at residues Asn5, Asn17, and Asn23. A helical transmembrane segment spans residues Ala38–Ser60. At Arg61–Asn70 the chain is on the cytoplasmic side. Residues Tyr71–Tyr93 form a helical membrane-spanning segment. Residues Leu94–Asp108 lie on the Extracellular side of the membrane. Cys107 and Cys182 are oxidised to a cystine. The chain crosses the membrane as a helical span at residues Ile109–Ile130. Residues Asp131–Arg151 lie on the Cytoplasmic side of the membrane. Residues Val152 to Phe172 form a helical membrane-spanning segment. The Extracellular portion of the chain corresponds to Gly173–Ala188. Residues Phe189–Tyr213 form a helical membrane-spanning segment. Residues Lys211 to Gln373 are interaction with PPP1R9B. At Ile214–Gln373 the chain is on the cytoplasmic side. Residues Met281–Lys332 form a disordered region. Residues Met374–Leu395 traverse the membrane as a helical segment. Residues Asn396–Ser409 are Extracellular-facing. A disulfide bridge links Cys399 with Cys401. The helical transmembrane segment at Ala410–Ile431 threads the bilayer. Residues Glu432–Cys443 lie on the Cytoplasmic side of the membrane. The S-palmitoyl cysteine moiety is linked to residue Cys443.

This sequence belongs to the G-protein coupled receptor 1 family. In terms of assembly, forms homo- and heterooligomers with DRD4. The interaction with DRD4 may modulate agonist-induced downstream signaling. Interacts with CADPS and CADPS2. Interacts with GPRASP1, PPP1R9B and CLIC6. Interacts with ARRB2. Interacts with HTR2A. Interacts with DRD1. Interacts with KCNA2. Post-translationally, palmitoylated. Palmitoylation which is required for proper localization to the plasma membrane and stability of the receptor could be carried on by ZDHHC4, ZDHHC3 and ZDHHC8.

It is found in the cell membrane. Its subcellular location is the golgi apparatus membrane. Its function is as follows. Dopamine receptor whose activity is mediated by G proteins which inhibit adenylyl cyclase. Positively regulates postnatal regression of retinal hyaloid vessels via suppression of VEGFR2/KDR activity, downstream of OPN5. This chain is D(2) dopamine receptor (DRD2), found in Chlorocebus aethiops (Green monkey).